We begin with the raw amino-acid sequence, 940 residues long: UvrABC system protein A (940 aa).

31–38 (GLSGSGKS) is an ATP binding site. A C4-type zinc finger spans residues 253 to 280 (CPICGYSMRELEPRLFSFNNPAGACPTC). ABC transporter domains follow at residues 310-587 (WDRR…PESL) and 607-937 (ANPE…RFLK). An ATP-binding site is contributed by 640 to 647 (GVSGSGKS). A C4-type zinc finger spans residues 740 to 766 (CEACQGDGVIKVEMHFLPDIYVPCDQC).

It belongs to the ABC transporter superfamily. UvrA family. As to quaternary structure, forms a heterotetramer with UvrB during the search for lesions.

It is found in the cytoplasm. The UvrABC repair system catalyzes the recognition and processing of DNA lesions. UvrA is an ATPase and a DNA-binding protein. A damage recognition complex composed of 2 UvrA and 2 UvrB subunits scans DNA for abnormalities. When the presence of a lesion has been verified by UvrB, the UvrA molecules dissociate. In terms of biological role, plays a role in recovery after DNA ADP-ribosylation. The sequence is that of UvrABC system protein A from Escherichia coli O127:H6 (strain E2348/69 / EPEC).